The following is a 318-amino-acid chain: Thioredoxin reductase (318 aa).

36 to 43 contacts FAD; the sequence is TGMQQGGQ. A disulfide bond links Cys-136 and Cys-139. 286–295 serves as a coordination point for FAD; it reads DVMDHNYRQA.

Belongs to the class-II pyridine nucleotide-disulfide oxidoreductase family. Homodimer. It depends on FAD as a cofactor.

It is found in the cytoplasm. It carries out the reaction [thioredoxin]-dithiol + NADP(+) = [thioredoxin]-disulfide + NADPH + H(+). In Vibrio cholerae serotype O1 (strain ATCC 39315 / El Tor Inaba N16961), this protein is Thioredoxin reductase (trxB).